Reading from the N-terminus, the 300-residue chain is tRNA U34 carboxymethyltransferase (300 aa).

Carboxy-S-adenosyl-L-methionine is bound by residues Lys-73, Trp-87, Lys-92, Gly-111, 133–135 (DPS), 160–161 (VE), Tyr-180, and Arg-293.

The protein belongs to the class I-like SAM-binding methyltransferase superfamily. CmoB family. In terms of assembly, homotetramer.

It catalyses the reaction carboxy-S-adenosyl-L-methionine + 5-hydroxyuridine(34) in tRNA = 5-carboxymethoxyuridine(34) in tRNA + S-adenosyl-L-homocysteine + H(+). Catalyzes carboxymethyl transfer from carboxy-S-adenosyl-L-methionine (Cx-SAM) to 5-hydroxyuridine (ho5U) to form 5-carboxymethoxyuridine (cmo5U) at position 34 in tRNAs. This is tRNA U34 carboxymethyltransferase from Nautilia profundicola (strain ATCC BAA-1463 / DSM 18972 / AmH).